The primary structure comprises 93 residues: Alpha-defensin 23 (93 aa).

The first 19 residues, 1–19 (MKTLVLLSALILLAFQVQA), serve as a signal peptide directing secretion. A propeptide spanning residues 20 to 58 (DPIQNTDEETKTEEQPGKEDQAVSVSFGDPEGSSLQEES) is cleaved from the precursor. The tract at residues 24–54 (NTDEETKTEEQPGKEDQAVSVSFGDPEGSSL) is disordered. Basic and acidic residues predominate over residues 27–40 (EETKTEEQPGKEDQ). Disulfide bonds link Cys-64-Cys-92, Cys-66-Cys-81, and Cys-71-Cys-91.

The protein belongs to the alpha-defensin family.

The protein localises to the secreted. In terms of biological role, may have microbicidal activities. The sequence is that of Alpha-defensin 23 (Defa23) from Mus musculus (Mouse).